Reading from the N-terminus, the 195-residue chain is Imidazoleglycerol-phosphate dehydratase (195 aa).

Belongs to the imidazoleglycerol-phosphate dehydratase family.

It is found in the cytoplasm. It catalyses the reaction D-erythro-1-(imidazol-4-yl)glycerol 3-phosphate = 3-(imidazol-4-yl)-2-oxopropyl phosphate + H2O. Its pathway is amino-acid biosynthesis; L-histidine biosynthesis; L-histidine from 5-phospho-alpha-D-ribose 1-diphosphate: step 6/9. In Burkholderia lata (strain ATCC 17760 / DSM 23089 / LMG 22485 / NCIMB 9086 / R18194 / 383), this protein is Imidazoleglycerol-phosphate dehydratase.